We begin with the raw amino-acid sequence, 457 residues long: Asparagine--tRNA ligase (457 aa).

Belongs to the class-II aminoacyl-tRNA synthetase family. As to quaternary structure, homodimer.

Its subcellular location is the cytoplasm. It carries out the reaction tRNA(Asn) + L-asparagine + ATP = L-asparaginyl-tRNA(Asn) + AMP + diphosphate + H(+). This chain is Asparagine--tRNA ligase, found in Phytoplasma australiense.